A 380-amino-acid chain; its full sequence is MPSPPPTPETATASDRTATPAPGMPILAVDAMGGDSAPGMVIAGLDIAAERHPNARFEVFGDAVQIDELVRLSKRLRNRVSIRPTTEIIPNELKPTAALRLRDASLRRAIDAVANGEAAGVISAGNTGAMLALAKIVLKTMSGIDRPAMAAIGPSARGDVVMLDLGANVVCDARNLVEFAVMGELFARTVLGLPHPTIGLLNVGSEEMKGDETLRRAAEALRESPIGPQFRGFIEGHDIAGGTVDVVVTDGFTGNVALKTGEGALRLVGDLLRRVFSANIASRLAYLLARPGLTRLREWLDPRRYNGAVLLGLNGVVVKSHGGADAEGFAHAVDVAMDMIVNRFNDRIRDDLGRHADRERLASDAFRATPPASATSVTTG.

The tract at residues 1-23 (MPSPPPTPETATASDRTATPAPG) is disordered.

It belongs to the PlsX family. In terms of assembly, homodimer. Probably interacts with PlsY.

It localises to the cytoplasm. It catalyses the reaction a fatty acyl-[ACP] + phosphate = an acyl phosphate + holo-[ACP]. It participates in lipid metabolism; phospholipid metabolism. Functionally, catalyzes the reversible formation of acyl-phosphate (acyl-PO(4)) from acyl-[acyl-carrier-protein] (acyl-ACP). This enzyme utilizes acyl-ACP as fatty acyl donor, but not acyl-CoA. The protein is Phosphate acyltransferase of Acidiphilium cryptum (strain JF-5).